A 67-amino-acid chain; its full sequence is Small ribosomal subunit protein bS21 (67 aa).

This sequence belongs to the bacterial ribosomal protein bS21 family.

The sequence is that of Small ribosomal subunit protein bS21 from Acidiphilium cryptum (strain JF-5).